The sequence spans 322 residues: 4-hydroxythreonine-4-phosphate dehydrogenase (322 aa).

Thr-132 contacts substrate. Positions 160, 205, and 260 each coordinate a divalent metal cation. Substrate contacts are provided by Lys-268, Asn-277, and Arg-286.

The protein belongs to the PdxA family. As to quaternary structure, homodimer. The cofactor is Zn(2+). Mg(2+) serves as cofactor. Requires Co(2+) as cofactor.

It localises to the cytoplasm. The catalysed reaction is 4-(phosphooxy)-L-threonine + NAD(+) = 3-amino-2-oxopropyl phosphate + CO2 + NADH. The protein operates within cofactor biosynthesis; pyridoxine 5'-phosphate biosynthesis; pyridoxine 5'-phosphate from D-erythrose 4-phosphate: step 4/5. Its function is as follows. Catalyzes the NAD(P)-dependent oxidation of 4-(phosphooxy)-L-threonine (HTP) into 2-amino-3-oxo-4-(phosphooxy)butyric acid which spontaneously decarboxylates to form 3-amino-2-oxopropyl phosphate (AHAP). This is 4-hydroxythreonine-4-phosphate dehydrogenase from Xanthomonas oryzae pv. oryzae (strain PXO99A).